A 170-amino-acid polypeptide reads, in one-letter code: VGGRGRGRGTAAAARREPGGAMAAGSITTLPALPEGGDGGAFAPGHFKDPNGGFFLRIHPDGRVDGVREKTDPHIKLQLQAEDRGVVSIKGVCANRYLAMKEDGRLLASKCVTDECFFFERLESNNYNTYRSRKYSSWYVALKRTGQYKLGSKTGPGQKAILFLPMSAKS.

A disordered region spans residues 1–21 (VGGRGRGRGTAAAARREPGGA). Arginine 4, arginine 6, and arginine 8 each carry omega-N-methylarginine; alternate. Arginine 4, arginine 6, and arginine 8 each carry symmetric dimethylarginine; alternate. Low complexity predominate over residues 9–21 (GTAAAARREPGGA). Residue asparagine 51 participates in heparin binding. Tyrosine 97 is modified (phosphotyrosine; by TEC). Lysine 110 participates in a covalent cross-link: Glycyl lysine isopeptide (Lys-Gly) (interchain with G-Cter in SUMO1). Residues 143 to 159 (KRTGQYKLGSKTGPGQK) form a heparin-binding region.

Belongs to the heparin-binding growth factors family. As to quaternary structure, monomer. Homodimer. Interacts with FGFR1, FGFR2, FGFR3 and FGFR4. Affinity between fibroblast growth factors (FGFs) and their receptors is increased by heparan sulfate glycosaminoglycans that function as coreceptors. Interacts with CSPG4, FGFBP1 and TEC. Found in a complex with FGFBP1, FGF1 and FGF2. Interacts with FGFBP3. Interacts with integrin ITGAV:ITGB3; the interaction is required for FGF2 signaling. Interacts with SNORC (via the extracellular domain). Interacts with glypican GPC3. The N-terminus of isoform 2 is blocked. Post-translationally, phosphorylation at Tyr-97 regulates FGF2 unconventional secretion.

It localises to the secreted. The protein localises to the nucleus. Acts as a ligand for FGFR1, FGFR2, FGFR3 and FGFR4. Also acts as an integrin ligand which is required for FGF2 signaling. Binds to integrin ITGAV:ITGB3. Plays an important role in the regulation of cell survival, cell division, cell differentiation and cell migration. Functions as a potent mitogen in vitro. Can induce angiogenesis. Mediates phosphorylation of ERK1/2 and thereby promotes retinal lens fiber differentiation. This Cavia porcellus (Guinea pig) protein is Fibroblast growth factor 2 (FGF2).